Reading from the N-terminus, the 76-residue chain is cAMP-dependent protein kinase inhibitor alpha (76 aa).

Position 2 is an N-acetylthreonine (Thr-2). The segment at 49 to 76 (KTEGEDDGQRSSTEQSGEAQGEAAKSES) is disordered.

This sequence belongs to the PKI family. As to expression, present at high levels in skeletal muscle and brain but is present at lower levels in heart, testis and liver.

Its function is as follows. Extremely potent competitive inhibitor of cAMP-dependent protein kinase activity, this protein interacts with the catalytic subunit of the enzyme after the cAMP-induced dissociation of its regulatory chains. This Mus musculus (Mouse) protein is cAMP-dependent protein kinase inhibitor alpha (Pkia).